Consider the following 752-residue polypeptide: Complement C2 (752 aa).

Positions 1 to 20 (MGPLMVLFCLLFLYPGLADS) are cleaved as a signal peptide. Sushi domains are found at residues 22–86 (PSCP…VCKP), 87–146 (VRCP…VCDN), and 149–206 (GHCP…ICRQ). 6 disulfides stabilise this stretch: Cys-24–Cys-64, Cys-51–Cys-84, Cys-89–Cys-131, Cys-117–Cys-144, Cys-151–Cys-191, and Cys-177–Cys-204. Asn-29 carries N-linked (GlcNAc...) asparagine glycosylation. Asn-112 is a glycosylation site (N-linked (GlcNAc...) asparagine). The 199-residue stretch at 254-452 (NLYLLLDCSQ…KALHQVFEHM (199 aa)) folds into the VWFA domain. An MIDAS-like motif motif is present at residues 260-264 (DCSQS). Residues Ser-262 and Ser-264 each contribute to the Mg(2+) site. Positions 262 and 264 each coordinate Mn(2+). 2 N-linked (GlcNAc...) asparagine glycosylation sites follow: Asn-290 and Asn-333. Thr-337 is a binding site for Mg(2+). Thr-337 serves as a coordination point for Mn(2+). Cystine bridges form between Cys-463-Cys-581, Cys-492-Cys-508, and Cys-584-Cys-600. Residues 464-744 (GVGNMSANAS…MQPWLRQHLG (281 aa)) form the Peptidase S1 domain. N-linked (GlcNAc...) asparagine glycans are attached at residues Asn-467 and Asn-471. Catalysis depends on charge relay system residues His-507 and Asp-561. An N-linked (GlcNAc...) asparagine glycan is attached at Asn-621. 2 disulfide bridges follow: Cys-638–Cys-665 and Cys-675–Cys-705. N-linked (GlcNAc...) (complex) asparagine glycosylation occurs at Asn-651. The active-site Charge relay system is the Ser-679.

It belongs to the peptidase S1 family. In terms of assembly, serine protease component of the C3 convertase, also named C4bC2b, composed of the serine protease complement C2b and complement C4b. Serine protease component of the C5 convertase, also named C4bC2bC3b, composed of the serine protease complement C2b, complement C3b, as well as complement C4b. As to quaternary structure, (Microbial infection) Interacts with Schistosoma haematobium TOR (via N-terminal extracellular domain). This results in inhibition of the classical and lectin pathway of complement activation, probably due to interference with binding of C2a to C4b such that C3 convertase cannot be formed. This infers resistance to complement-mediated cell lysis, allowing parasite survival and infection. Requires Mg(2+) as cofactor. The cofactor is Mn(2+). In terms of processing, cleaved and activated by different proteases depending on the complement pathway to generate complement C2a and serine protease complement C2b chains. Cleaved and activated by C1S following activation by the classical complement system. Cleaved and activated by MASP2 following activation by the lectin complement system. Cleaved and activated by GZMK following activation by the GZMK complement system.

The protein localises to the secreted. It is found in the cell surface. The enzyme catalyses Selective cleavage of Arg-|-Ser bond in complement component C3 alpha-chain to form C3a and C3b, and Arg-|-Xaa bond in complement component C5 alpha-chain to form C5a and C5b.. In terms of biological role, precursor of the catalytic component of the C3 and C5 convertase complexes, which are part of the complement pathway, a cascade of proteins that leads to phagocytosis and breakdown of pathogens and signaling that strengthens the adaptive immune system. Component C2 is part of the classical, lectin and GZMK complement systems. Catalytic component of the complement C3 and C5 convertase complexes. Following complement activation, recruited to the surface of pathogens by complement C4b opsonin to form the C3 convertase, or C3b and C4b opsonins to form the C5 convertase. As part of the C3 convertase, cleaves and activate C3 into C3a anaphylatoxin and C3b opsonin, the next components of the complement pathways. As part of the C5 convertase, cleaves and activate C5 into C5a anaphylatoxin and C5b component of the membrane attack complex. The sequence is that of Complement C2 from Homo sapiens (Human).